Reading from the N-terminus, the 183-residue chain is ATP synthase subunit delta (183 aa).

The protein belongs to the ATPase delta chain family. In terms of assembly, F-type ATPases have 2 components, F(1) - the catalytic core - and F(0) - the membrane proton channel. F(1) has five subunits: alpha(3), beta(3), gamma(1), delta(1), epsilon(1). F(0) has three main subunits: a(1), b(2) and c(10-14). The alpha and beta chains form an alternating ring which encloses part of the gamma chain. F(1) is attached to F(0) by a central stalk formed by the gamma and epsilon chains, while a peripheral stalk is formed by the delta and b chains.

It localises to the cell inner membrane. F(1)F(0) ATP synthase produces ATP from ADP in the presence of a proton or sodium gradient. F-type ATPases consist of two structural domains, F(1) containing the extramembraneous catalytic core and F(0) containing the membrane proton channel, linked together by a central stalk and a peripheral stalk. During catalysis, ATP synthesis in the catalytic domain of F(1) is coupled via a rotary mechanism of the central stalk subunits to proton translocation. Functionally, this protein is part of the stalk that links CF(0) to CF(1). It either transmits conformational changes from CF(0) to CF(1) or is implicated in proton conduction. The protein is ATP synthase subunit delta of Oleidesulfovibrio alaskensis (strain ATCC BAA-1058 / DSM 17464 / G20) (Desulfovibrio alaskensis).